The sequence spans 295 residues: Tyrosine recombinase XerC (295 aa).

The Core-binding (CB) domain occupies 1–85; sequence MLTALNRYWD…ALRRFLSFLV (85 aa). In terms of domain architecture, Tyr recombinase spans 106-285; that stretch reads HLPKNMDGEQ…NFQHLAEVYD (180 aa). Residues Arg-145, Lys-169, His-237, Arg-240, and His-263 contribute to the active site. Catalysis depends on Tyr-272, which acts as the O-(3'-phospho-DNA)-tyrosine intermediate.

This sequence belongs to the 'phage' integrase family. XerC subfamily. Forms a cyclic heterotetrameric complex composed of two molecules of XerC and two molecules of XerD.

Its subcellular location is the cytoplasm. Its function is as follows. Site-specific tyrosine recombinase, which acts by catalyzing the cutting and rejoining of the recombining DNA molecules. The XerC-XerD complex is essential to convert dimers of the bacterial chromosome into monomers to permit their segregation at cell division. It also contributes to the segregational stability of plasmids. The protein is Tyrosine recombinase XerC of Haemophilus influenzae (strain 86-028NP).